Here is a 106-residue protein sequence, read N- to C-terminus: MNNIRKGDEVIVLTGRDKKRRGTVLARVDADHVLVEGVNVVKKHVKANPMANNPGGIVEKTLPIHISNVALFNPATGKGDRVGVKEVDGRKVRVFRSNGAVVGAKA.

Belongs to the universal ribosomal protein uL24 family. As to quaternary structure, part of the 50S ribosomal subunit.

In terms of biological role, one of two assembly initiator proteins, it binds directly to the 5'-end of the 23S rRNA, where it nucleates assembly of the 50S subunit. One of the proteins that surrounds the polypeptide exit tunnel on the outside of the subunit. The polypeptide is Large ribosomal subunit protein uL24 (Bordetella petrii (strain ATCC BAA-461 / DSM 12804 / CCUG 43448)).